We begin with the raw amino-acid sequence, 213 residues long: 5''-phosphoribostamycin phosphatase (213 aa).

Residue His-8 is the Tele-phosphohistidine intermediate of the active site. His-155 is a catalytic residue.

The protein belongs to the histidine phosphatase superfamily.

The enzyme catalyses 5''-phosphoribostamycin + H2O = ribostamycin + phosphate. It participates in antibiotic biosynthesis; butirosin biosynthesis. Functionally, catalyzes dephosphorylation of 5''-phosphoribostamycin to generate ribostamycinin the biosynthetic pathway of butirosin. The polypeptide is 5''-phosphoribostamycin phosphatase (btrP) (Niallia circulans (Bacillus circulans)).